Consider the following 79-residue polypeptide: Large ribosomal subunit protein bL31 (79 aa).

Belongs to the bacterial ribosomal protein bL31 family. Type A subfamily. In terms of assembly, part of the 50S ribosomal subunit.

Binds the 23S rRNA. This chain is Large ribosomal subunit protein bL31, found in Synechococcus sp. (strain CC9902).